Consider the following 325-residue polypeptide: Elongation factor P--(R)-beta-lysine ligase (325 aa).

76–78 is a substrate binding site; the sequence is SPE. Residues 100–102 and N109 contribute to the ATP site; that span reads RNE. A substrate-binding site is contributed by Y118. An ATP-binding site is contributed by 244–245; sequence EL. E251 is a binding site for substrate. ATP is bound at residue G300.

Belongs to the class-II aminoacyl-tRNA synthetase family. EpmA subfamily. In terms of assembly, homodimer.

The catalysed reaction is D-beta-lysine + L-lysyl-[protein] + ATP = N(6)-((3R)-3,6-diaminohexanoyl)-L-lysyl-[protein] + AMP + diphosphate + H(+). With EpmB is involved in the beta-lysylation step of the post-translational modification of translation elongation factor P (EF-P) on 'Lys-34'. Catalyzes the ATP-dependent activation of (R)-beta-lysine produced by EpmB, forming a lysyl-adenylate, from which the beta-lysyl moiety is then transferred to the epsilon-amino group of EF-P 'Lys-34'. The sequence is that of Elongation factor P--(R)-beta-lysine ligase from Salmonella choleraesuis (strain SC-B67).